A 152-amino-acid chain; its full sequence is MKTFSATPADIDKKWIIIDAEGVVLGRLASIVATRLRGKHKPSFTPHMDMGDNVIVINAEKIQMTGKKREENFYWHTGHPGGIKSRTKQQILEGAHPERVVMQAVKRMLPGNRLSRQQMTNLRIYAGAEHPHEAQSPEVLDVKSMNKKNTRS.

The interval 129–152 (EHPHEAQSPEVLDVKSMNKKNTRS) is disordered.

It belongs to the universal ribosomal protein uL13 family. Part of the 50S ribosomal subunit.

Its function is as follows. This protein is one of the early assembly proteins of the 50S ribosomal subunit, although it is not seen to bind rRNA by itself. It is important during the early stages of 50S assembly. The chain is Large ribosomal subunit protein uL13 from Ruegeria sp. (strain TM1040) (Silicibacter sp.).